Consider the following 84-residue polypeptide: Putative membrane protein insertion efficiency factor (84 aa).

The protein belongs to the UPF0161 family.

The protein resides in the cell inner membrane. Its function is as follows. Could be involved in insertion of integral membrane proteins into the membrane. This Nostoc sp. (strain PCC 7120 / SAG 25.82 / UTEX 2576) protein is Putative membrane protein insertion efficiency factor.